A 196-amino-acid polypeptide reads, in one-letter code: Cupin-domain-containing oxidoreductase srdD (196 aa).

The cupin-like domain stretch occupies residues 99–165 (DFGPGVESPL…GNGTLPGRVM (67 aa)).

This sequence belongs to the virC family.

In terms of biological role, highly reducing polyketide synthase; part of the gene cluster that mediates the biosynthesis of sordarial, a salicylic aldehyde structurally related to the phytotoxin pyriculol. The most interesting aspect of this pathway is formation of an aromatic product from the highly reducing polyketide synthase srdA. SrdA synthesizes a reduced polyketide chain from one molecule of acetyl-CoA and five molecules of malonyl-CoA. The polyketide chain is then reductively released as an aldehyde. The oxidoreductases srdC, srdD and srdE then oxidize one of the hydroxy groups to facilitate the intramolecular aldol condensation, followed by dehydration to yield a salicylic aldehyde. This aldehyde can undergo facile reduction by endogenous reductases to yield the alcohol 1-hydroxy-2-hydroxymethyl-3-pent-1,3-dienylbenzene. The flavin-dependent srdI counteract against the propensity of the aldehydes to be reduced under physiological conditions and is responsible for reoxidizing 1-hydroxy-2-hydroxymethyl-3-pent-1,3-dienylbenzene back to the salicylic aldehyde. This salicylic aldehyde is then selectively epoxidized by the cupin-domain-containing oxidoreductase srdB to yield the epoxide, which can be hydrolyzed stereoselectively by the hydrolase srdG to give the final product sordarial. This is Cupin-domain-containing oxidoreductase srdD from Neurospora crassa (strain ATCC 24698 / 74-OR23-1A / CBS 708.71 / DSM 1257 / FGSC 987).